A 251-amino-acid chain; its full sequence is Orcokinin peptides type A (251 aa).

An N-terminal signal peptide occupies residues 1-20 (MTAQMFTIALLLSLSAIAAA). 3 propeptides span residues 21 to 46 (GTIK…GAPV), 225 to 231 (DYDVFPD), and 249 to 251 (NVE).

The protein belongs to the orcokinin family.

Its subcellular location is the secreted. Myotropic peptides that enhance both the frequency and amplitude of spontaneous hindgut contractions. The chain is Orcokinin peptides type A from Procambarus clarkii (Red swamp crayfish).